A 249-amino-acid chain; its full sequence is Leucyl/phenylalanyl-tRNA--protein transferase (249 aa).

This sequence belongs to the L/F-transferase family.

It localises to the cytoplasm. It carries out the reaction N-terminal L-lysyl-[protein] + L-leucyl-tRNA(Leu) = N-terminal L-leucyl-L-lysyl-[protein] + tRNA(Leu) + H(+). It catalyses the reaction N-terminal L-arginyl-[protein] + L-leucyl-tRNA(Leu) = N-terminal L-leucyl-L-arginyl-[protein] + tRNA(Leu) + H(+). The catalysed reaction is L-phenylalanyl-tRNA(Phe) + an N-terminal L-alpha-aminoacyl-[protein] = an N-terminal L-phenylalanyl-L-alpha-aminoacyl-[protein] + tRNA(Phe). Functions in the N-end rule pathway of protein degradation where it conjugates Leu, Phe and, less efficiently, Met from aminoacyl-tRNAs to the N-termini of proteins containing an N-terminal arginine or lysine. In Xanthomonas axonopodis pv. citri (strain 306), this protein is Leucyl/phenylalanyl-tRNA--protein transferase.